The sequence spans 217 residues: RING-H2 finger protein ATL40 (217 aa).

A helical transmembrane segment spans residues 28–48 (IFLVTTVSFSIIIIIVFVYYL). Residues 100–142 (CAVCLSLLEEKDNARMLPNCKHVFHVSCVDTWLTTQSTCPVCR) form an RING-type; atypical zinc finger. 2 stretches are compositionally biased toward basic and acidic residues: residues 143-160 (TEAE…REGP) and 186-217 (DSFR…IERQ). Residues 143-217 (TEAEPSHPRL…QDRELDIERQ (75 aa)) are disordered.

The protein belongs to the RING-type zinc finger family. ATL subfamily.

The protein resides in the membrane. The enzyme catalyses S-ubiquitinyl-[E2 ubiquitin-conjugating enzyme]-L-cysteine + [acceptor protein]-L-lysine = [E2 ubiquitin-conjugating enzyme]-L-cysteine + N(6)-ubiquitinyl-[acceptor protein]-L-lysine.. The protein operates within protein modification; protein ubiquitination. The sequence is that of RING-H2 finger protein ATL40 (ATL40) from Arabidopsis thaliana (Mouse-ear cress).